Reading from the N-terminus, the 502-residue chain is Maturase K (502 aa).

The protein belongs to the intron maturase 2 family. MatK subfamily.

The protein resides in the plastid. It is found in the chloroplast. In terms of biological role, usually encoded in the trnK tRNA gene intron. Probably assists in splicing its own and other chloroplast group II introns. The polypeptide is Maturase K (Spiraea cantoniensis (Reeve's meadowsweet)).